We begin with the raw amino-acid sequence, 403 residues long: Serine/threonine transporter SstT (403 aa).

A run of 8 helical transmembrane segments spans residues 11-31, 51-71, 81-101, 138-158, 175-195, 213-233, 285-305, and 319-339; these read GNLVIRIAIGLVLGVLLAFIS, AIAPILVFVLVLSAIANKEVG, VMYVLGTFLAALTAVVFSFIF, ALANANFIGILAWAIGLGIPL, AVSYVVKMVISVAPIGVFGLV, LLGVLLGAMMTVIFVLDPILV, VAIPLGATINMAGAAITVTVL, and FMTALLLSIVASICACGASGV.

It belongs to the dicarboxylate/amino acid:cation symporter (DAACS) (TC 2.A.23) family.

Its subcellular location is the cell inner membrane. The enzyme catalyses L-serine(in) + Na(+)(in) = L-serine(out) + Na(+)(out). It carries out the reaction L-threonine(in) + Na(+)(in) = L-threonine(out) + Na(+)(out). Functionally, involved in the import of serine and threonine into the cell, with the concomitant import of sodium (symport system). The sequence is that of Serine/threonine transporter SstT from Haemophilus ducreyi (strain 35000HP / ATCC 700724).